The primary structure comprises 229 residues: Large ribosomal subunit protein uL1 (229 aa).

This sequence belongs to the universal ribosomal protein uL1 family. Part of the 50S ribosomal subunit.

Its function is as follows. Binds directly to 23S rRNA. The L1 stalk is quite mobile in the ribosome, and is involved in E site tRNA release. In terms of biological role, protein L1 is also a translational repressor protein, it controls the translation of the L11 operon by binding to its mRNA. The sequence is that of Large ribosomal subunit protein uL1 from Chlorobium chlorochromatii (strain CaD3).